The chain runs to 659 residues: Sodium/nucleoside cotransporter 2 (659 aa).

A compositionally biased stretch (basic and acidic residues) spans M1–A10. The segment at M1–P22 is disordered. S46 is modified (phosphoserine). A run of 14 helical transmembrane segments spans residues I81 to N101, A105 to L124, K149 to D167, E173 to K193, R201 to E221, I234 to V254, Q261 to L281, T296 to M315, V337 to F356, L363 to Y382, V424 to W444, T455 to W475, A530 to L550, and A568 to V588.

It belongs to the concentrative nucleoside transporter (CNT) (TC 2.A.41) family. Expressed in liver (in bile canalicular membrane vesicles (CMV) but not in sinusoidal vesicles), jejunum, spleen and heart. Also expressed in brain and skeletal muscle. Not expressed in kidney, muscle and lung.

It localises to the membrane. The protein localises to the apicolateral cell membrane. The catalysed reaction is adenosine(out) + Na(+)(out) = adenosine(in) + Na(+)(in). It catalyses the reaction inosine(out) + Na(+)(out) = inosine(in) + Na(+)(in). It carries out the reaction guanosine(out) + Na(+)(out) = guanosine(in) + Na(+)(in). The enzyme catalyses uridine(out) + Na(+)(out) = uridine(in) + Na(+)(in). With respect to regulation, inhibited by formycin B, partially inhibited by purine analog ara-A. Its function is as follows. Sodium-dependent and purine-selective. Exhibits the transport characteristics of the nucleoside transport system cif or N1 subtype (N1/cif) (selective for purine nucleosides and uridine). Accepts purine, analogs of purine nucleosides and uridine, and exhibits high affinity for adenosine. May contribute to regulate the transport of organic compounds in testes across the blood-testis-barrier. In Rattus norvegicus (Rat), this protein is Sodium/nucleoside cotransporter 2 (Slc28a2).